The sequence spans 330 residues: tRNA N6-adenosine threonylcarbamoyltransferase (330 aa).

Fe cation contacts are provided by histidine 110 and histidine 114. Substrate contacts are provided by residues 133-137 (MVSGG), aspartate 166, glycine 179, aspartate 183, and asparagine 271. Aspartate 299 lines the Fe cation pocket.

Belongs to the KAE1 / TsaD family. Requires Fe(2+) as cofactor.

It is found in the cytoplasm. The enzyme catalyses L-threonylcarbamoyladenylate + adenosine(37) in tRNA = N(6)-L-threonylcarbamoyladenosine(37) in tRNA + AMP + H(+). Functionally, required for the formation of a threonylcarbamoyl group on adenosine at position 37 (t(6)A37) in tRNAs that read codons beginning with adenine. Is involved in the transfer of the threonylcarbamoyl moiety of threonylcarbamoyl-AMP (TC-AMP) to the N6 group of A37, together with TsaE and TsaB. TsaD likely plays a direct catalytic role in this reaction. The protein is tRNA N6-adenosine threonylcarbamoyltransferase of Thermosipho africanus (strain TCF52B).